The chain runs to 222 residues: MIF4G domain-containing protein B (222 aa).

The MIF4G domain occupies 3-205; that stretch reads NSSKEDYKIQ…LEILEFRAGG (203 aa).

It belongs to the MIF4GD family. As to quaternary structure, interacts with eif4g1, eif4g2 and slbp; probably tethered by SLBP to the 3'-end of mRNAs ending with the histone stem-loop, it also interacts with eif4g1 which is bound to their 5'-end.

Its subcellular location is the cytoplasm. The protein localises to the nucleus. Functions in replication-dependent translation of histone mRNAs which differ from other eukaryotic mRNAs in that they do not end with a poly-A tail but a stem-loop. May participate in circularizing those mRNAs specifically enhancing their translation. The polypeptide is MIF4G domain-containing protein B (mif4gdb) (Danio rerio (Zebrafish)).